The chain runs to 572 residues: Glutamate--tRNA ligase (572 aa).

The 'HIGH' region motif lies at 112-122 (PNPNGPPSLGN).

This sequence belongs to the class-I aminoacyl-tRNA synthetase family. Glutamate--tRNA ligase type 2 subfamily.

It localises to the cytoplasm. The catalysed reaction is tRNA(Glu) + L-glutamate + ATP = L-glutamyl-tRNA(Glu) + AMP + diphosphate. In terms of biological role, catalyzes the attachment of glutamate to tRNA(Glu) in a two-step reaction: glutamate is first activated by ATP to form Glu-AMP and then transferred to the acceptor end of tRNA(Glu). This is Glutamate--tRNA ligase from Methanocella arvoryzae (strain DSM 22066 / NBRC 105507 / MRE50).